A 349-amino-acid chain; its full sequence is Cobalt-precorrin-5B C(1)-methyltransferase (349 aa).

This sequence belongs to the CbiD family.

The enzyme catalyses Co-precorrin-5B + S-adenosyl-L-methionine = Co-precorrin-6A + S-adenosyl-L-homocysteine. It functions in the pathway cofactor biosynthesis; adenosylcobalamin biosynthesis; cob(II)yrinate a,c-diamide from sirohydrochlorin (anaerobic route): step 6/10. In terms of biological role, catalyzes the methylation of C-1 in cobalt-precorrin-5B to form cobalt-precorrin-6A. This chain is Cobalt-precorrin-5B C(1)-methyltransferase, found in Saccharolobus islandicus (strain Y.N.15.51 / Yellowstone #2) (Sulfolobus islandicus).